The sequence spans 407 residues: Ribosomal protein uL3-like (407 aa).

Residues 1-31 (MSHRKFSAPRHGHLGFLPHKRSHRHRGKVKT) show a composition bias toward basic residues. Disordered regions lie at residues 1-35 (MSHR…WPRD) and 387-407 (AFMG…SGDL).

This sequence belongs to the universal ribosomal protein uL3 family. Component of the large ribosomal subunit in striated muscle cells.

In terms of biological role, heart- and skeletal muscle-specific component of the ribosome, which regulates muscle function. Component of the large ribosomal subunit in striated muscle cells: replaces the RPL3 paralog in the ribosome in these cells. The ribosome is a large ribonucleoprotein complex responsible for the synthesis of proteins in the cell. Inhibits myotube growth and muscle function. The chain is Ribosomal protein uL3-like from Homo sapiens (Human).